The following is a 209-amino-acid chain: ATP-dependent Clp protease proteolytic subunit (209 aa).

S111 (nucleophile) is an active-site residue. H136 is a catalytic residue.

It belongs to the peptidase S14 family. As to quaternary structure, fourteen ClpP subunits assemble into 2 heptameric rings which stack back to back to give a disk-like structure with a central cavity, resembling the structure of eukaryotic proteasomes.

The protein resides in the cytoplasm. It catalyses the reaction Hydrolysis of proteins to small peptides in the presence of ATP and magnesium. alpha-casein is the usual test substrate. In the absence of ATP, only oligopeptides shorter than five residues are hydrolyzed (such as succinyl-Leu-Tyr-|-NHMec, and Leu-Tyr-Leu-|-Tyr-Trp, in which cleavage of the -Tyr-|-Leu- and -Tyr-|-Trp bonds also occurs).. In terms of biological role, cleaves peptides in various proteins in a process that requires ATP hydrolysis. Has a chymotrypsin-like activity. Plays a major role in the degradation of misfolded proteins. This Dechloromonas aromatica (strain RCB) protein is ATP-dependent Clp protease proteolytic subunit.